Reading from the N-terminus, the 485-residue chain is MTTATNRQDFKVADLSLAPFGRKEITLAEHEMPGLMSIRKEFAAAQPLAGARITGSLHMTVQTAVLIETLVALGAEVRWASCNIFSTQDHAAAAIAVGPNGTPEAPAGVPVFAWKGETLEEYWWCTEQALTWPNTPTGGPNMILDDGGDATLLVHKGVEFEKAGAAPDPSTADSEEYAHILTLLNRTLGEAPQKWTQLASEIRGVTEETTTGVHRLYEMHRDGSLLFPAINVNDAVTKSKFDNKYGCRHSLIDGINRATDVLIGGKTAVVFGYGDVGKGCAESLRGQGARVIITEIDPICALQAAMDGYQVATLDDVVEQADIFVTTTGNKDIIMAKDMARMKHQAIVGNIGHFDNEIDMAGLAKIDGIVKDEVKPQVHTWTFPDGKVLIVLSEGRLLNLGNATGHPSFVMSNSFADQTLAQIELFTKPEDYPTDVYVLPKHLDEKVARLHLDALGVKLTTLRPEQAAYIGVEVEGPYKPDHYRY.

Positions 60, 146, and 208 each coordinate substrate. 209 to 211 (TTT) is a binding site for NAD(+). Substrate contacts are provided by Lys238 and Asp242. NAD(+) contacts are provided by residues Asn243, 272-277 (GYGDVG), Glu295, Asn330, 351-353 (IGH), and Asn399.

It belongs to the adenosylhomocysteinase family. NAD(+) is required as a cofactor.

The protein resides in the cytoplasm. It catalyses the reaction S-adenosyl-L-homocysteine + H2O = L-homocysteine + adenosine. It functions in the pathway amino-acid biosynthesis; L-homocysteine biosynthesis; L-homocysteine from S-adenosyl-L-homocysteine: step 1/1. Functionally, may play a key role in the regulation of the intracellular concentration of adenosylhomocysteine. This chain is Adenosylhomocysteinase, found in Streptomyces griseus subsp. griseus (strain JCM 4626 / CBS 651.72 / NBRC 13350 / KCC S-0626 / ISP 5235).